The sequence spans 343 residues: 3-keto-steroid reductase (343 aa).

Positions 19 and 42 each coordinate NADP(+). Catalysis depends on proton donor residues Ser-180 and Tyr-203. NADP(+) contacts are provided by Tyr-203, Lys-207, and Ser-239. The active-site Lowers pKa of active site Tyr is the Lys-207.

Belongs to the short-chain dehydrogenases/reductases (SDR) family. ERG27 subfamily.

It carries out the reaction a 3beta-hydroxysteroid + NADP(+) = a 3-oxosteroid + NADPH + H(+). It participates in steroid biosynthesis; zymosterol biosynthesis; zymosterol from lanosterol: step 5/6. Responsible for the reduction of the keto group on the C-3 of sterols. The chain is 3-keto-steroid reductase (ERG27) from Yarrowia lipolytica (strain CLIB 122 / E 150) (Yeast).